Here is a 529-residue protein sequence, read N- to C-terminus: Structure-specific endonuclease subunit SLX1 homolog 1 (529 aa).

The GIY-YIG domain maps to 4–89; sequence RFHCVYLLTS…PTKSTRLKTQ (86 aa). Residues 231–364 form an SLX1-type zinc finger; the sequence is CALCSLPLRS…PCQPCPCPLC (134 aa). Disordered stretches follow at residues 275-305, 409-437, and 470-501; these read VTMG…MDAH, NSSL…YCGD, and SVSL…RMTD. Residues 282–297 are compositionally biased toward basic and acidic residues; sequence RNERSGEYSNKIKDDS.

The protein belongs to the SLX1 family. As to quaternary structure, forms a heterodimer with a member of the SLX4 family. Requires a divalent metal cation as cofactor.

The protein localises to the nucleus. In terms of biological role, catalytic subunit of a heterodimeric structure-specific endonuclease that resolves DNA secondary structures generated during DNA repair and recombination. Has endonuclease activity towards branched DNA substrates, introducing single-strand cuts in duplex DNA close to junctions with ss-DNA. The chain is Structure-specific endonuclease subunit SLX1 homolog 1 from Trypanosoma cruzi (strain CL Brener).